We begin with the raw amino-acid sequence, 506 residues long: Glutamate--tRNA ligase (506 aa).

The short motif at 12–22 (PSPTGDPHVGT) is the 'HIGH' region element. The short motif at 253–257 (KLSKR) is the 'KMSKS' region element. Residue Lys-256 coordinates ATP.

It belongs to the class-I aminoacyl-tRNA synthetase family. Glutamate--tRNA ligase type 1 subfamily. Monomer.

The protein resides in the cytoplasm. The enzyme catalyses tRNA(Glu) + L-glutamate + ATP = L-glutamyl-tRNA(Glu) + AMP + diphosphate. In terms of biological role, catalyzes the attachment of glutamate to tRNA(Glu) in a two-step reaction: glutamate is first activated by ATP to form Glu-AMP and then transferred to the acceptor end of tRNA(Glu). This Chlamydia trachomatis serovar A (strain ATCC VR-571B / DSM 19440 / HAR-13) protein is Glutamate--tRNA ligase.